Consider the following 521-residue polypeptide: uncharacterized protein (521 aa).

This is an uncharacterized protein from Magallana gigas (Pacific oyster).